The following is a 1149-amino-acid chain: FH2 domain-containing protein 1 (1149 aa).

Disordered stretches follow at residues 18 to 79, 464 to 540, 554 to 660, and 681 to 1149; these read LATA…PPPG, NHDR…SRLS, ESAT…PLLP, and SPKS…PLQK. Pro residues-rich tracts occupy residues 33-48 and 56-79; these read ASPPPPPPPPPPPPCP and PSPPPPLPPPLPGGPPIPPPPPPG. The region spanning 88–483 is the FH2 domain; the sequence is GYSSLGKKKR…QLQRQKEMEQ (396 aa). Over residues 464-485 the composition is skewed to basic and acidic residues; it reads NHDREEQERKQLQRQKEMEQKR. Residues 486 to 504 show a composition bias toward polar residues; that stretch reads YSWSTGELGSFGRSSSEND. Residue Ser501 is modified to Phosphoserine. The segment covering 522–532 has biased composition (low complexity); that stretch reads PRPNSPSYRPP. Composition is skewed to polar residues over residues 554-575 and 591-604; these read ESATSSPEDPNKFNSLPRSSPR and SHGPNFTHEPQASK. Phosphoserine occurs at positions 645 and 655. Residues 681-693 are compositionally biased toward polar residues; that stretch reads SPKSLEEGSQLTL. The segment covering 784 to 795 has biased composition (basic and acidic residues); that stretch reads MDSRAGGDKQEE. Low complexity predominate over residues 801 to 822; sequence GSVSSGAGEAGSSQVSSNSVSS. Basic and acidic residues predominate over residues 844 to 856; sequence PKDRPSRGKDAIA. Residues 926 to 947 are compositionally biased toward polar residues; that stretch reads ETPSSTDTPLSRRSSVRGTSDT. The tract at residues 960-1086 is MTBD; microtubule-binding domain; the sequence is EEPRLPRSSG…VKGGSEDSAS (127 aa). Over residues 965-974 the composition is skewed to low complexity; it reads PRSSGSISGR. Composition is skewed to polar residues over residues 1042 to 1052 and 1064 to 1074; these read ARNTVASSSRS and TGLTRTVSQRQ. A compositionally biased stretch (basic and acidic residues) spans 1123-1134; sequence GTTERSSLRLKD.

In terms of assembly, interacts with CEP170. Brain, heart and lung (at protein level).

It is found in the golgi apparatus. The protein localises to the cell projection. It localises to the cilium. Microtubule-associated formin which regulates both actin and microtubule dynamics. Induces microtubule acetylation and stabilization and actin stress fiber formation. Regulates Golgi ribbon formation. Required for normal cilia assembly. Early in cilia assembly, may assist in the maturation and positioning of the centrosome/basal body, and once cilia assembly has initiated, may also promote cilia elongation by inhibiting disassembly. The polypeptide is FH2 domain-containing protein 1 (Fhdc1) (Mus musculus (Mouse)).